We begin with the raw amino-acid sequence, 333 residues long: Procathepsin L (333 aa).

An N-terminal signal peptide occupies residues 1–17 (MNPTLILAAFCLGIASA). A propeptide spans 18–113 (TLTFDHSLEA…KVFQEPLFYE (96 aa)) (activation peptide). Glu-122 is a binding site for Zn(2+). 2 disulfide bridges follow: Cys-135–Cys-178 and Cys-169–Cys-211. Residue Cys-138 is part of the active site. 5 residues coordinate Zn(2+): Glu-163, Asp-184, Glu-199, Glu-205, and Glu-209. The N-linked (GlcNAc...) asparagine glycan is linked to Asn-221. Residues Asp-227, Asp-250, His-253, Asp-273, and Asp-275 each coordinate Zn(2+). A disulfide bond links Cys-269 and Cys-322. His-276 is an active-site residue. Positions 289-291 (ESD) are excised as a propeptide. Asn-300 is an active-site residue.

This sequence belongs to the peptidase C1 family. Dimer of a heavy and a light chain linked by disulfide bonds. Interacts with Long isoform of CD74/Ii chain; the interaction stabilizes the conformation of mature CTSL. During export along the endocytic pathway, pro-CTSL undergoes several proteolytic cleavages to generate the CTSL single-chain and two-chain mature forms, composed of a heavy chain linked to a light chain by disulfide bonds. Autocleavage; produces the single-chain CTSL after cleavage of the propeptide. The cleavage can be intermolecular.

The protein localises to the lysosome. It is found in the apical cell membrane. Its subcellular location is the cytoplasmic vesicle. It localises to the secretory vesicle. The protein resides in the chromaffin granule. The protein localises to the secreted. It is found in the extracellular space. Its subcellular location is the nucleus. It carries out the reaction Specificity close to that of papain. As compared to cathepsin B, cathepsin L exhibits higher activity toward protein substrates, but has little activity on Z-Arg-Arg-NHMec, and no peptidyl-dipeptidase activity.. Its activity is regulated as follows. Inhibited by the propeptide produced by autocleavage. Long isoform of CD74/Ii chain stabilizes the conformation of mature CTSL by binding to its active site and serving as a chaperone to help maintain a pool of mature enzyme in endocytic compartments and extracellular space of APCs. IFNG enhances the conversion into the CTSL mature and active form. Inhibited by CST6. Inhibited by the glycopeptide antibiotic teicoplanin. Inhibited by amantadine. In terms of biological role, thiol protease important for the overall degradation of proteins in lysosomes. Plays a critical for normal cellular functions such as general protein turnover, antigen processing and bone remodeling. Involved in the solubilization of cross-linked TG/thyroglobulin and in the subsequent release of thyroid hormone thyroxine (T4) by limited proteolysis of TG/thyroglobulin in the thyroid follicle lumen. In neuroendocrine chromaffin cells secretory vesicles, catalyzes the prohormone proenkephalin processing to the active enkephalin peptide neurotransmitter. In thymus, regulates CD4(+) T cell positive selection by generating the major histocompatibility complex class II (MHCII) bound peptide ligands presented by cortical thymic epithelial cells. Also mediates invariant chain processing in cortical thymic epithelial cells. Major elastin-degrading enzyme at neutral pH. Accumulates as a mature and active enzyme in the extracellular space of antigen presenting cells (APCs) to regulate degradation of the extracellular matrix in the course of inflammation. Secreted form generates endostatin from COL18A1. Critical for cardiac morphology and function. Plays an important role in hair follicle morphogenesis and cycling, as well as epidermal differentiation. Required for maximal stimulation of steroidogenesis by TIMP1. (Microbial infection) In cells lacking TMPRSS2 expression, facilitates human coronaviruses SARS-CoV and SARS-CoV-2 infections via a slow acid-activated route with the proteolysis of coronavirus spike (S) glycoproteins in lysosome for entry into host cell. Proteolysis within lysosomes is sufficient to activate membrane fusion by coronaviruses SARS-CoV and EMC (HCoV-EMC) S as well as Zaire ebolavirus glycoproteins. Its function is as follows. Functions in the regulation of cell cycle progression through proteolytic processing of the CUX1 transcription factor. Translation initiation at downstream start sites allows the synthesis of isoforms that are devoid of a signal peptide and localize to the nucleus where they cleave the CUX1 transcription factor and modify its DNA binding properties. The protein is Procathepsin L of Homo sapiens (Human).